Reading from the N-terminus, the 163-residue chain is Ribosome maturation factor RimM (163 aa).

A PRC barrel domain is found at 94-162 (ADEYYYIDLI…DHLVIAADFI (69 aa)).

This sequence belongs to the RimM family. In terms of assembly, binds ribosomal protein uS19.

The protein localises to the cytoplasm. Its function is as follows. An accessory protein needed during the final step in the assembly of 30S ribosomal subunit, possibly for assembly of the head region. Essential for efficient processing of 16S rRNA. May be needed both before and after RbfA during the maturation of 16S rRNA. It has affinity for free ribosomal 30S subunits but not for 70S ribosomes. The protein is Ribosome maturation factor RimM of Zymomonas mobilis subsp. mobilis (strain ATCC 31821 / ZM4 / CP4).